Here is a 167-residue protein sequence, read N- to C-terminus: UPF0114 protein Tola_1474 (167 aa).

Transmembrane regions (helical) follow at residues 15–35, 53–73, 109–129, and 136–156; these read IMAP…IKFF, LILI…IVMV, VAAS…MNTE, and IKWY…MGYL.

This sequence belongs to the UPF0114 family.

The protein localises to the cell membrane. This Tolumonas auensis (strain DSM 9187 / NBRC 110442 / TA 4) protein is UPF0114 protein Tola_1474.